Consider the following 1042-residue polypeptide: MRPKTFPATTYSGNSRQRLQEIREGLKQPSKASTQGLLVGPNSDTSLDAKVLGSKDASRQQQMRATPKFGPYQKALREIRYSLLPFANESGTSAAAEVNRQMLQELVNAGCDQEMAGRALKQTGSRSIEAALEYISKMGYLDPRNEQIVRVIKQTSPGKGLAPTPVTRRPSFEGTGEALPSYHQLGGANYEGPAALEEMPRQYLDFLFPGAGAGTHGAQAHQHPPKGYSTAVEPSAHFPGTHYGRGHLLSEQPGYGVQRSSSFQNKTPPDAYSSMAKAQGGPPASLTFPAHAGLYTASHHKPAATPPGAHPLHVLGTRGPTFTGESSAQAVLAPSRNSLNADLYELGSTVPWSAAPLARRDSLQKQGLEASRPHVAFRAGPSRTNSFNNPQPEPSLPAPNTVTAVTAAHILHPVKSVRVLRPEPQTAVGPSHPAWVAAPTAPATESLETKEGSAGPHPLDVDYGGSERRCPPPPYPKHLLLPSKSEQYSVDLDSLCTSVQQSLRGGTEQDRSDKSHKGAKGDKAGRDKKQIQTSPVPVRKNSRDEEKRESRIKSYSPYAFKFFMEQHVENVIKTYQQKVSRRLQLEQEMAKAGLCEAEQEQMRKILYQKESNYNRLKRAKMDKSMFVKIKTLGIGAFGEVCLACKLDTHALYAMKTLRKKDVLNRNQVAHVKAERDILAEADNEWVVKLYYSFQDKDSLYFVMDYIPGGDMMSLLIRMEVFPEHLARFYIAELTLAIESVHKMGFIHRDIKPDNILIDLDGHIKLTDFGLCTGFRWTHNSKYYQKGNHMRQDSMEPGDLWDDVSNCRCGDRLKTLEQRAQKQHQRCLAHSLVGTPNYIAPEVLLRKGYTQLCDWWSVGVILFEMLVGQPPFLAPTPTETQLKVINWESTLHIPTQVRLSAEARDLITKLCCAADCRLGRDGADDLKAHPFFNTIDFSRDIRKQPAPYVPTISHPMDTSNFDPVDEESPWHEASGESAKAWDTLASPSSKHPEHAFYEFTFRRFFDDNGYPFRCPKPSEPAESADPGDADLEGAAEGCQPVYV.

The segment at R23 to D44 is disordered. Polar residues predominate over residues S30–D44. A Phosphoserine; by AURKA modification is found at S82. The UBA domain maps to E97–M138. The segment at R100–Y140 is interaction with ubiquitinated AMOTL2. Residues H237–P282 are disordered. Polar residues predominate over residues Q258–T267. At T267 the chain carries Phosphothreonine. At S362 the chain carries Phosphoserine. Disordered stretches follow at residues R378–P399, P442–L481, and Q501–S550. Positions P472 to Y475 match the PPxY motif motif. A compositionally biased stretch (basic and acidic residues) spans T507–Q530. S534 is modified (phosphoserine). The span at N541–S550 shows a compositional bias: basic and acidic residues. The region spanning F626 to F931 is the Protein kinase domain. ATP is bound by residues L632 to V640 and K655. Residue D749 is the Proton acceptor of the active site. The AGC-kinase C-terminal domain occupies N932–P1010. T999 is subject to Phosphothreonine. A disordered region spans residues P1014–V1042.

Belongs to the protein kinase superfamily. AGC Ser/Thr protein kinase family. Interacts with and is phosphorylated by AURKA. Binds to AR. Interacts with AJUBA during mitosis and this complex regulates organization of the spindle apparatus through recruitment of gamma-tubulin to the centrosome. Interacts (via PPxY motif) with YAP1 (via WW domains). Interacts with MOB1A and MOB1B. Interacts with LIMD1, WTIP and AJUBA. Interacts with SNAI1. Interacts with WWC1, WWC2 and WWC3 (via their WW domains). Interacts (via UBA domain) with ubiquitinated AMOTL2; the interaction promotes LATS2 phosphorylation of YAP1. It depends on Mg(2+) as a cofactor. Autophosphorylated and phosphorylated during M-phase and the G1/S-phase of the cell cycle. Phosphorylated and activated by STK3/MST2. Phosphorylated by MAP4Ks; in parallel to STK3/MST2 and resulting to its activation. Phosphorylation by NUAK2 may regulate its activity in phosphorylation and inactivation YAP1. As to expression, expressed at high levels in ovary and testis and at lower levels in all other tissues examined.

The protein localises to the cytoplasm. Its subcellular location is the cytoskeleton. The protein resides in the microtubule organizing center. It localises to the centrosome. It is found in the spindle pole. The protein localises to the nucleus. It catalyses the reaction L-seryl-[protein] + ATP = O-phospho-L-seryl-[protein] + ADP + H(+). The catalysed reaction is L-threonyl-[protein] + ATP = O-phospho-L-threonyl-[protein] + ADP + H(+). Functionally, negative regulator of YAP1 in the Hippo signaling pathway that plays a pivotal role in organ size control and tumor suppression by restricting proliferation and promoting apoptosis. The core of this pathway is composed of a kinase cascade wherein STK3/MST2 and STK4/MST1, in complex with its regulatory protein SAV1, phosphorylates and activates LATS1/2 in complex with its regulatory protein MOB1, which in turn phosphorylates and inactivates YAP1 oncoprotein and WWTR1/TAZ. Phosphorylation of YAP1 by LATS2 inhibits its translocation into the nucleus to regulate cellular genes important for cell proliferation, cell death, and cell migration. Also phosphorylates YAP1 in response to cell contact inhibition-driven WWP1 ubiquitination of AMOTL2, which results in LATS2 activation. Acts as a tumor suppressor which plays a critical role in centrosome duplication, maintenance of mitotic fidelity and genomic stability. Negatively regulates G1/S transition by down-regulating cyclin E/CDK2 kinase activity. Negative regulator of the androgen receptor. Phosphorylates SNAI1 in the nucleus leading to its nuclear retention and stabilization, which enhances its epithelial-mesenchymal transition and tumor cell invasion/migration activities. This tumor-promoting activity is independent of its effects upon YAP1 or WWTR1/TAZ. Acts as an activator of the NLRP3 inflammasome by mediating phosphorylation of 'Ser-265' of NLRP3 following NLRP3 palmitoylation, promoting NLRP3 activation by NEK7. The protein is Serine/threonine-protein kinase LATS2 of Mus musculus (Mouse).